Reading from the N-terminus, the 348-residue chain is D-alanine--D-alanine ligase (348 aa).

The ATP-grasp domain maps to 132–334; sequence KRVLESIGIP…YPDLIEELVT (203 aa). 162-217 is a binding site for ATP; sequence LARLTFPIFVKPANMGSSVGISKAQTKVELRKAIQLALTYDSRVLIEQGVVAREIE. Mg(2+) is bound by residues aspartate 288, glutamate 301, and asparagine 303.

It belongs to the D-alanine--D-alanine ligase family. Requires Mg(2+) as cofactor. Mn(2+) serves as cofactor.

The protein localises to the cytoplasm. The enzyme catalyses 2 D-alanine + ATP = D-alanyl-D-alanine + ADP + phosphate + H(+). It functions in the pathway cell wall biogenesis; peptidoglycan biosynthesis. In terms of biological role, cell wall formation. The chain is D-alanine--D-alanine ligase from Streptococcus pyogenes serotype M18 (strain MGAS8232).